We begin with the raw amino-acid sequence, 273 residues long: Putative pyruvate, phosphate dikinase regulatory protein (273 aa).

ADP is bound at residue 149–156 (GPSRTSKT).

The protein belongs to the pyruvate, phosphate/water dikinase regulatory protein family. PDRP subfamily.

It catalyses the reaction N(tele)-phospho-L-histidyl/L-threonyl-[pyruvate, phosphate dikinase] + ADP = N(tele)-phospho-L-histidyl/O-phospho-L-threonyl-[pyruvate, phosphate dikinase] + AMP + H(+). The enzyme catalyses N(tele)-phospho-L-histidyl/O-phospho-L-threonyl-[pyruvate, phosphate dikinase] + phosphate + H(+) = N(tele)-phospho-L-histidyl/L-threonyl-[pyruvate, phosphate dikinase] + diphosphate. Its function is as follows. Bifunctional serine/threonine kinase and phosphorylase involved in the regulation of the pyruvate, phosphate dikinase (PPDK) by catalyzing its phosphorylation/dephosphorylation. The sequence is that of Putative pyruvate, phosphate dikinase regulatory protein from Rickettsia akari (strain Hartford).